The chain runs to 249 residues: MVNSPQNPRQDQRQDLDLTSFSATGGEPVEWRISDAPVPYPEAVAAMEARVAAIAAGEAPELVWLLEHPPLYTSGTSGKDSDLLDPRFPTFATGRGGQLTYHGPGQRVAYIMLDLKRRRPDVRAYVASLEELILKTLAAFNVRGERREDRVGVWVKRPDKGDGYEDKIAAIGVRLKRWVSFHGIAINVEPELSHFAGIVPCGVADPRYGVTSLVDLGQLVTMADVDVALRQAFEELFGPTRALVPEAAA.

The interval 1 to 23 is disordered; the sequence is MVNSPQNPRQDQRQDLDLTSFSA. Positions 57 to 241 constitute a BPL/LPL catalytic domain; the sequence is GEAPELVWLL…AFEELFGPTR (185 aa). Residues 95–102, 170–172, and 183–185 each bind substrate; these read RGGQLTYH, AIG, and GIA. Residue Cys-201 is the Acyl-thioester intermediate of the active site.

This sequence belongs to the LipB family.

It is found in the cytoplasm. The catalysed reaction is octanoyl-[ACP] + L-lysyl-[protein] = N(6)-octanoyl-L-lysyl-[protein] + holo-[ACP] + H(+). Its pathway is protein modification; protein lipoylation via endogenous pathway; protein N(6)-(lipoyl)lysine from octanoyl-[acyl-carrier-protein]: step 1/2. Functionally, catalyzes the transfer of endogenously produced octanoic acid from octanoyl-acyl-carrier-protein onto the lipoyl domains of lipoate-dependent enzymes. Lipoyl-ACP can also act as a substrate although octanoyl-ACP is likely to be the physiological substrate. This is Octanoyltransferase from Bradyrhizobium diazoefficiens (strain JCM 10833 / BCRC 13528 / IAM 13628 / NBRC 14792 / USDA 110).